The chain runs to 314 residues: Cytochrome bo(3) ubiquinol oxidase subunit 2 (314 aa).

The N-terminal stretch at 1–23 (MSKKRYPRLFGILPFLGMLLLSG) is a signal peptide. Residue C24 is the site of N-palmitoyl cysteine attachment. Residue C24 is the site of S-diacylglycerol cysteine attachment. Topologically, residues 24–42 (CNWTLLDPKGQVGIEQKNL) are periplasmic. The chain crosses the membrane as a helical span at residues 43-63 (ILIATGLMLLVVIPVIIMTVV). Residues 64–86 (FAWKYRASNKAATYTPDWSHSTK) are Cytoplasmic-facing. The chain crosses the membrane as a helical span at residues 87-107 (IEAAVWIIPILIIIALGYFTY). The Periplasmic segment spans residues 108–314 (HSTHKLDPYR…SMQPAAGAEE (207 aa)). Over residues 278–293 (YEGMNRGRPSHEEAGS) the composition is skewed to basic and acidic residues. Residues 278 to 314 (YEGMNRGRPSHEEAGSKDLATTKGVESSMQPAAGAEE) form a disordered region.

It belongs to the cytochrome c oxidase subunit 2 family. In terms of assembly, heterooctamer of two A chains, two B chains, two C chains and two D chains.

The protein localises to the cell inner membrane. In terms of biological role, cytochrome bo(3) ubiquinol terminal oxidase is the component of the aerobic respiratory chain of E.coli that predominates when cells are grown at high aeration. Has proton pump activity across the membrane in addition to electron transfer, pumping 2 protons/electron. In Pseudomonas putida (Arthrobacter siderocapsulatus), this protein is Cytochrome bo(3) ubiquinol oxidase subunit 2 (cyoA).